Consider the following 893-residue polypeptide: UPF0182 protein CLD_0809 (893 aa).

A run of 7 helical transmembrane segments spans residues 9–29, 49–69, 94–114, 154–174, 202–222, 246–266, and 273–293; these read IPLF…NFII, AIII…WMYY, LFFI…SSSY, VIIS…FILE, LAIV…IKIW, FYKI…LSIV, and VSIC…ASFL.

It belongs to the UPF0182 family.

It localises to the cell membrane. The protein is UPF0182 protein CLD_0809 of Clostridium botulinum (strain Okra / Type B1).